Reading from the N-terminus, the 407-residue chain is Argininosuccinate synthase (407 aa).

ATP contacts are provided by residues 13–21 and Ala-40; that span reads AYSGGLDTS. L-citrulline is bound by residues Tyr-91 and Ser-96. Gly-121 contributes to the ATP binding site. Positions 123, 127, and 128 each coordinate L-aspartate. Asn-127 is a binding site for L-citrulline. L-citrulline contacts are provided by Arg-131, Ser-182, Ser-191, Glu-267, and Tyr-279.

This sequence belongs to the argininosuccinate synthase family. Type 1 subfamily. In terms of assembly, homotetramer.

It localises to the cytoplasm. It carries out the reaction L-citrulline + L-aspartate + ATP = 2-(N(omega)-L-arginino)succinate + AMP + diphosphate + H(+). Its pathway is amino-acid biosynthesis; L-arginine biosynthesis; L-arginine from L-ornithine and carbamoyl phosphate: step 2/3. The polypeptide is Argininosuccinate synthase (Bartonella bacilliformis (strain ATCC 35685 / KC583 / Herrer 020/F12,63)).